The chain runs to 251 residues: Triosephosphate isomerase (251 aa).

9 to 11 lines the substrate pocket; that stretch reads NWK. Catalysis depends on H94, which acts as the Electrophile. E166 functions as the Proton acceptor in the catalytic mechanism. Substrate-binding positions include G172, S211, and 232–233; that span reads GG.

This sequence belongs to the triosephosphate isomerase family. Homodimer.

It is found in the cytoplasm. The catalysed reaction is D-glyceraldehyde 3-phosphate = dihydroxyacetone phosphate. It functions in the pathway carbohydrate biosynthesis; gluconeogenesis. It participates in carbohydrate degradation; glycolysis; D-glyceraldehyde 3-phosphate from glycerone phosphate: step 1/1. In terms of biological role, involved in the gluconeogenesis. Catalyzes stereospecifically the conversion of dihydroxyacetone phosphate (DHAP) to D-glyceraldehyde-3-phosphate (G3P). In Stenotrophomonas maltophilia (strain K279a), this protein is Triosephosphate isomerase.